We begin with the raw amino-acid sequence, 330 residues long: NADH-quinone oxidoreductase subunit H (330 aa).

8 helical membrane passes run 11-31, 81-101, 114-134, 154-174, 187-207, 238-258, 270-290, and 309-329; these read ILVAVLKAIVILLAVVVCGAL, FIFVLAPMIAFAAMLMAFAII, IGILFFFAMAGLSVYAVLFAG, ISYEVFLALALMGVVAQVGSF, LWFIIPQFFGFCTFFIAGVAV, FFVGEYVGIVTISALLVTLFF, QIPFFWFALKTAFFIMIFILL, and FCLPLTLINLLVTGALVLAAA.

This sequence belongs to the complex I subunit 1 family. In terms of assembly, NDH-1 is composed of 13 different subunits. Subunits NuoA, H, J, K, L, M, N constitute the membrane sector of the complex.

It is found in the cell inner membrane. The catalysed reaction is a quinone + NADH + 5 H(+)(in) = a quinol + NAD(+) + 4 H(+)(out). NDH-1 shuttles electrons from NADH, via FMN and iron-sulfur (Fe-S) centers, to quinones in the respiratory chain. The immediate electron acceptor for the enzyme in this species is believed to be ubiquinone. Couples the redox reaction to proton translocation (for every two electrons transferred, four hydrogen ions are translocated across the cytoplasmic membrane), and thus conserves the redox energy in a proton gradient. This subunit may bind ubiquinone. The sequence is that of NADH-quinone oxidoreductase subunit H from Ectopseudomonas mendocina (strain ymp) (Pseudomonas mendocina).